A 425-amino-acid chain; its full sequence is UDP-N-acetylglucosamine 1-carboxyvinyltransferase (425 aa).

Lys-23–Asn-24 lines the phosphoenolpyruvate pocket. UDP-N-acetyl-alpha-D-glucosamine is bound at residue Arg-100. Cys-124 serves as the catalytic Proton donor. Cys-124 carries the post-translational modification 2-(S-cysteinyl)pyruvic acid O-phosphothioketal. UDP-N-acetyl-alpha-D-glucosamine contacts are provided by Asp-313 and Ile-335.

This sequence belongs to the EPSP synthase family. MurA subfamily.

It localises to the cytoplasm. It carries out the reaction phosphoenolpyruvate + UDP-N-acetyl-alpha-D-glucosamine = UDP-N-acetyl-3-O-(1-carboxyvinyl)-alpha-D-glucosamine + phosphate. It functions in the pathway cell wall biogenesis; peptidoglycan biosynthesis. In terms of biological role, cell wall formation. Adds enolpyruvyl to UDP-N-acetylglucosamine. In Wolbachia pipientis wMel, this protein is UDP-N-acetylglucosamine 1-carboxyvinyltransferase.